The following is a 616-amino-acid chain: uncharacterized protein (616 aa).

Disordered regions lie at residues 166–243 (SRTY…TPEL) and 272–298 (DHEE…IEEI). The segment covering 184–200 (RVDESRPSENSSRHDYV) has biased composition (basic and acidic residues). The segment covering 221–237 (TRTSNVTQTQPPTNQVF) has biased composition (polar residues). Positions 272–287 (DHEEEEGQDDDEETEI) are enriched in acidic residues. The 75-residue stretch at 343–417 (ILIKLKFMND…VHCHISTTPY (75 aa)) folds into the Ubiquitin-like domain.

This is an uncharacterized protein from Caenorhabditis elegans.